The primary structure comprises 296 residues: Phosphatidylserine decarboxylase proenzyme (296 aa).

Active-site charge relay system; for autoendoproteolytic cleavage activity residues include aspartate 113, histidine 169, and serine 256. Catalysis depends on serine 256, which acts as the Schiff-base intermediate with substrate; via pyruvic acid; for decarboxylase activity. The residue at position 256 (serine 256) is a Pyruvic acid (Ser); by autocatalysis.

Belongs to the phosphatidylserine decarboxylase family. PSD-B subfamily. Prokaryotic type II sub-subfamily. In terms of assembly, heterodimer of a large membrane-associated beta subunit and a small pyruvoyl-containing alpha subunit. The cofactor is pyruvate. In terms of processing, is synthesized initially as an inactive proenzyme. Formation of the active enzyme involves a self-maturation process in which the active site pyruvoyl group is generated from an internal serine residue via an autocatalytic post-translational modification. Two non-identical subunits are generated from the proenzyme in this reaction, and the pyruvate is formed at the N-terminus of the alpha chain, which is derived from the carboxyl end of the proenzyme. The autoendoproteolytic cleavage occurs by a canonical serine protease mechanism, in which the side chain hydroxyl group of the serine supplies its oxygen atom to form the C-terminus of the beta chain, while the remainder of the serine residue undergoes an oxidative deamination to produce ammonia and the pyruvoyl prosthetic group on the alpha chain. During this reaction, the Ser that is part of the protease active site of the proenzyme becomes the pyruvoyl prosthetic group, which constitutes an essential element of the active site of the mature decarboxylase.

It is found in the cell membrane. It catalyses the reaction a 1,2-diacyl-sn-glycero-3-phospho-L-serine + H(+) = a 1,2-diacyl-sn-glycero-3-phosphoethanolamine + CO2. Its pathway is phospholipid metabolism; phosphatidylethanolamine biosynthesis; phosphatidylethanolamine from CDP-diacylglycerol: step 2/2. In terms of biological role, catalyzes the formation of phosphatidylethanolamine (PtdEtn) from phosphatidylserine (PtdSer). The polypeptide is Phosphatidylserine decarboxylase proenzyme (Clostridium kluyveri (strain ATCC 8527 / DSM 555 / NBRC 12016 / NCIMB 10680 / K1)).